Consider the following 457-residue polypeptide: BAG family molecular chaperone regulator 4 (457 aa).

Residues 1-20 show a composition bias toward low complexity; the sequence is MSALRRSGYGPSDGPSYGRY. The interval 1-104 is disordered; that stretch reads MSALRRSGYG…PYPGYNSNYW (104 aa). Ser7 carries the post-translational modification Phosphoserine. The segment covering 31 to 48 has biased composition (pro residues); that stretch reads HVPPPLYPPLRPEPPQPP. Omega-N-methylarginine is present on residues Arg41, Arg54, Arg108, and Arg185. Disordered regions lie at residues 128 to 335 and 348 to 374; these read LNSY…SDLL and YGNA…SSDE. Polar residues predominate over residues 160-193; it reads YTQSNYSTEVPNTYRSPGNSPTPMSRWMYSQQDC. Low complexity predominate over residues 255–268; the sequence is PWPSAAPSAPSAGS. Residues 284 to 295 show a composition bias toward pro residues; sequence PQPPPSPPPQQP. 2 stretches are compositionally biased toward polar residues: residues 326-335 and 348-365; these read AVNNDNSDLL and YGNA…SNNL. Residues 379-456 enclose the BAG domain; that stretch reads SIKKIIHVLE…AILEKLEKKG (78 aa).

As to quaternary structure, binds to the ATPase domain of HSP/HSC70 chaperones. Binds to the death domain of TNFRSF12. Binds to the death domain of TNFRSF1A in the absence of TNF and thereby prevents binding of adapter molecules such as TRADD or TRAF2. Interacts with PRKN.

The protein localises to the cytoplasm. Its function is as follows. Inhibits the chaperone activity of HSP70/HSC70 by promoting substrate release. Prevents constitutive TNFRSF1A signaling. Negative regulator of PRKN translocation to damaged mitochondria. The chain is BAG family molecular chaperone regulator 4 (Bag4) from Mus musculus (Mouse).